Consider the following 156-residue polypeptide: Acyl carrier protein, mitochondrial (156 aa).

The transit peptide at 1 to 68 (MASRVLSAYV…GRVTQLCRQY (68 aa)) directs the protein to the mitochondrion. One can recognise a Carrier domain in the interval 77–152 (EGIQDRVLYV…EIVDYIADKK (76 aa)). K88 bears the N6-acetyllysine mark. Position 112 is an O-(pantetheine 4'-phosphoryl)serine (S112).

This sequence belongs to the acyl carrier protein (ACP) family. As to quaternary structure, mammalian complex I is composed of 45 different subunits. Interacts with ETFRF1. Identified in a complex composed of MALSU1, MIEF1 upstream open reading frame protein and NDUFAB1; within the trimeric complex, MIEF1 upstream open reading frame protein functions as a bridging scaffold that interacts with MALSU1 on one side, and with NDUFAB1 on the other side. The complex interacts with the mitochondrial large ribosomal subunit. Interacts with alpha-1-microglobulin chain; this interaction is required for the maintenance of mitochondrial redox homeostasis. Component of the mitochondrial core iron-sulfur cluster (ISC) complex composed of NFS1, LYRM4, NDUFAB1, ISCU, FXN, and FDX2; this complex is a heterohexamer containing two copies of each monomer. Component of the cyteine desulfurase complex composed of NFS1, LYRM4 and NDUFAB1; this complex contributes to the stability and cysteine desulfurase activity of NFS1. Post-translationally, phosphopantetheinylation at Ser-112 is essential for interactions with LYR motif-containing proteins.

It localises to the mitochondrion. Functionally, carrier of the growing fatty acid chain in fatty acid biosynthesis. Accessory and non-catalytic subunit of the mitochondrial membrane respiratory chain NADH dehydrogenase (Complex I), which functions in the transfer of electrons from NADH to the respiratory chain. Accessory protein, of the core iron-sulfur cluster (ISC) assembly complex, that regulates, in association with LYRM4, the stability and the cysteine desulfurase activity of NFS1 and participates in the [2Fe-2S] clusters assembly on the scaffolding protein ISCU. The core iron-sulfur cluster (ISC) assembly complex is involved in the de novo synthesis of a [2Fe-2S] cluster, the first step of the mitochondrial iron-sulfur protein biogenesis. This process is initiated by the cysteine desulfurase complex (NFS1:LYRM4:NDUFAB1) that produces persulfide which is delivered on the scaffold protein ISCU in a FXN-dependent manner. Then this complex is stabilized by FDX2 which provides reducing equivalents to accomplish the [2Fe-2S] cluster assembly. Finally, the [2Fe-2S] cluster is transferred from ISCU to chaperone proteins, including HSCB, HSPA9 and GLRX5. The sequence is that of Acyl carrier protein, mitochondrial from Gorilla gorilla gorilla (Western lowland gorilla).